The primary structure comprises 496 residues: Probable glycine dehydrogenase (decarboxylating) subunit 2 (496 aa).

Lys265 bears the N6-(pyridoxal phosphate)lysine mark.

It belongs to the GcvP family. C-terminal subunit subfamily. The glycine cleavage system is composed of four proteins: P, T, L and H. In this organism, the P 'protein' is a heterodimer of two subunits. The cofactor is pyridoxal 5'-phosphate.

It catalyses the reaction N(6)-[(R)-lipoyl]-L-lysyl-[glycine-cleavage complex H protein] + glycine + H(+) = N(6)-[(R)-S(8)-aminomethyldihydrolipoyl]-L-lysyl-[glycine-cleavage complex H protein] + CO2. Its function is as follows. The glycine cleavage system catalyzes the degradation of glycine. The P protein binds the alpha-amino group of glycine through its pyridoxal phosphate cofactor; CO(2) is released and the remaining methylamine moiety is then transferred to the lipoamide cofactor of the H protein. The polypeptide is Probable glycine dehydrogenase (decarboxylating) subunit 2 (Thioalkalivibrio sulfidiphilus (strain HL-EbGR7)).